Reading from the N-terminus, the 380-residue chain is Glucose-1-phosphate adenylyltransferase (380 aa).

Alpha-D-glucose 1-phosphate is bound by residues Tyr99, Gly164, 179–180 (EK), and Ser190.

The protein belongs to the bacterial/plant glucose-1-phosphate adenylyltransferase family. In terms of assembly, homotetramer.

It carries out the reaction alpha-D-glucose 1-phosphate + ATP + H(+) = ADP-alpha-D-glucose + diphosphate. It participates in glycan biosynthesis; glycogen biosynthesis. Involved in the biosynthesis of ADP-glucose, a building block required for the elongation reactions to produce glycogen. Catalyzes the reaction between ATP and alpha-D-glucose 1-phosphate (G1P) to produce pyrophosphate and ADP-Glc. The protein is Glucose-1-phosphate adenylyltransferase of Bacillus subtilis (strain 168).